A 191-amino-acid polypeptide reads, in one-letter code: Photosystem I assembly protein Ycf4 (191 aa).

Helical transmembrane passes span 34–54 (VASM…SSYF) and 68–88 (IFVP…LLAI).

It belongs to the Ycf4 family.

It is found in the cellular thylakoid membrane. Seems to be required for the assembly of the photosystem I complex. The polypeptide is Photosystem I assembly protein Ycf4 (Prochlorococcus marinus (strain NATL2A)).